We begin with the raw amino-acid sequence, 397 residues long: Torsin-3A (397 aa).

The N-terminal stretch at 1–25 (MLRGPWRQLWLFFLLLLPGAPEPRG) is a signal peptide. N-linked (GlcNAc...) asparagine glycosylation is present at asparagine 122. An ATP-binding site is contributed by 167-174 (GWSGTGKN).

Belongs to the ClpA/ClpB family. Torsin subfamily. May not form homohexamers. N-glycosylated. As to expression, ubiquitously expressed. Highest expression in stomach, salivary glands and lymph nodes. Isoform 2 is expressed in placenta.

The protein localises to the cytoplasm. The protein resides in the endoplasmic reticulum lumen. The sequence is that of Torsin-3A (TOR3A) from Homo sapiens (Human).